We begin with the raw amino-acid sequence, 366 residues long: MAEFVRAQIFGTTFEITSRYTDLQPVGMGAFGLVCSARDQLTGQPVAVKKIMKPFSTPVLSKRTYRELKLLKHLRHENIISLSDIFISPLEDIYFVTELLGTDLHRLLTSRPLEKQFIQYFLYQILRGLKYVHSAGVVHRDLKPSNILINENCDLKICDFGLARIQDPQMTGYVSTRYYRAPEIMLTWQKYDVEVDIWSAGCIFAEMLEGKPLFPGKDHVNQFSIITELLGTPPDDVIQTICSENTLRFVKSLPKRERQPLANKFKNADPEAVDLLERMLVFDPKKRIRAGEALAHEYLSPYHDPTDEPEAEEKFDWSFNDADLPVDTWKIMMYSEILDFHNIDQGNDAGQVLMEGGVAQAQQNYA.

Residues 20–299 enclose the Protein kinase domain; the sequence is YTDLQPVGMG…AGEALAHEYL (280 aa). ATP is bound by residues 26 to 34 and Lys-49; that span reads VGMGAFGLV. The Proton acceptor role is filled by Asp-141. Residue Thr-171 is modified to Phosphothreonine. The short motif at 171 to 173 is the TXY element; sequence TGY. The residue at position 173 (Tyr-173) is a Phosphotyrosine.

The protein belongs to the protein kinase superfamily. Ser/Thr protein kinase family. MAP kinase subfamily. HOG1 sub-subfamily. In terms of assembly, interacts with the AGC kinase ypkA. Interacts with sakA upon osmotic and cell wall stresses. Mg(2+) is required as a cofactor. Post-translationally, dually phosphorylated on Thr-171 and Tyr-173, which activates the enzyme. Environmental stresses such as high temperature, osmotic stress, cold stress or ethanol stress modulate the activation of sakA via phosphorylation.

Its subcellular location is the cytoplasm. It is found in the nucleus. The enzyme catalyses L-seryl-[protein] + ATP = O-phospho-L-seryl-[protein] + ADP + H(+). It carries out the reaction L-threonyl-[protein] + ATP = O-phospho-L-threonyl-[protein] + ADP + H(+). Activated by tyrosine and threonine phosphorylation. Deactivated by protein phosphatase 2C homolog 2 ptcB. Functionally, proline-directed serine/threonine-protein kinase involved in a signal transduction pathway that is activated by changes in the osmolarity of the extracellular environment. Controls osmotic regulation of transcription of target genes. Involved in environmental stress response. With mpkC, plays a redundant or cooperative role in the conidial stress resistance. Also plays a supportive role in osmotic stress adaptation when sakA is deficient. Involved in paradoxical growth, the cell wall integrity (CWI) pathway and biofilm formation. Also collaborates with mpkC to allow ful virulence in a neutropenic murine model ofinvasive pulmonary aspergillosis. MpkC and sakA have both independent and collaborative functions during the transcriptional response to transient osmotic stress and sakA not only seems to modulate pathways involved in nucleotide, fatty acid, nitrogen and organic acid biosynthesis but is also important for the activation of genes involved in mitochondrial and endoplasmic reticulum functions. The polypeptide is Mitogen-activated protein kinase sakA (Aspergillus fumigatus (strain ATCC MYA-4609 / CBS 101355 / FGSC A1100 / Af293) (Neosartorya fumigata)).